The sequence spans 119 residues: Acidic phospholipase A2 DE-III (119 aa).

7 disulfide bridges follow: cysteine 11–cysteine 72, cysteine 26–cysteine 118, cysteine 28–cysteine 44, cysteine 43–cysteine 99, cysteine 50–cysteine 92, cysteine 60–cysteine 85, and cysteine 79–cysteine 90. Positions 27, 29, and 31 each coordinate Ca(2+). Residue histidine 47 is part of the active site. Residue aspartate 48 participates in Ca(2+) binding. Aspartate 93 is a catalytic residue.

The protein belongs to the phospholipase A2 family. Group I subfamily. D49 sub-subfamily. It depends on Ca(2+) as a cofactor. As to expression, expressed by the venom gland.

The protein localises to the secreted. The catalysed reaction is a 1,2-diacyl-sn-glycero-3-phosphocholine + H2O = a 1-acyl-sn-glycero-3-phosphocholine + a fatty acid + H(+). Its function is as follows. PLA2 catalyzes the calcium-dependent hydrolysis of the 2-acyl groups in 3-sn-phosphoglycerides. The chain is Acidic phospholipase A2 DE-III from Naja melanoleuca (Forest cobra).